The sequence spans 282 residues: Plant cysteine oxidase 3 (282 aa).

Residues His131, His133, and His202 each coordinate Fe cation.

This sequence belongs to the cysteine dioxygenase family. Requires Fe(2+) as cofactor.

Its subcellular location is the nucleus. The protein localises to the cytoplasm. The enzyme catalyses L-cysteine + O2 = 3-sulfino-L-alanine + H(+). In terms of biological role, catalyzes the oxidation of N-terminal cysteine residues (N-Cys), thus preparing the protein for N-end rule pathway-mediated proteasomal degradation, upstream of the N-end rule enzymes ATE1, ATE2 and PRT6. Controls the preparation of the group VII ethylene response factor (ERF-VII) proteins for degradation via the 26S proteasome N-end rule pathway. Acts as an oxygen sensor that controls the stability of ERF-VII proteins, which are stabilized in flooding-induced hypoxia, and regulate transcriptional adaptation to these adverse conditions. In Arabidopsis thaliana (Mouse-ear cress), this protein is Plant cysteine oxidase 3.